The sequence spans 360 residues: sn-glycerol-3-phosphate import ATP-binding protein UgpC (360 aa).

The 232-residue stretch at 4–235 (LSLKGVRKSY…PATTFVASFI (232 aa)) folds into the ABC transporter domain. 37-44 (GPSGCGKS) contacts ATP.

It belongs to the ABC transporter superfamily. sn-glycerol-3-phosphate importer (TC 3.A.1.1.3) family. As to quaternary structure, the complex is composed of two ATP-binding proteins (UgpC), two transmembrane proteins (UgpA and UgpE) and a solute-binding protein (UgpB).

It localises to the cell inner membrane. The enzyme catalyses sn-glycerol 3-phosphate(out) + ATP + H2O = sn-glycerol 3-phosphate(in) + ADP + phosphate + H(+). Part of the ABC transporter complex UgpBAEC involved in sn-glycerol-3-phosphate (G3P) import. Responsible for energy coupling to the transport system. The polypeptide is sn-glycerol-3-phosphate import ATP-binding protein UgpC (Burkholderia thailandensis (strain ATCC 700388 / DSM 13276 / CCUG 48851 / CIP 106301 / E264)).